The chain runs to 289 residues: Rhodopsin (289 aa).

Residues 1–7 (YLVNPAA) are Extracellular-facing. The helical transmembrane segment at 8–32 (YAALGAYMFLLILIGFPVNFLTLYV) threads the bilayer. The Cytoplasmic portion of the chain corresponds to 33–44 (TIEHKKLRTPLN). A helical transmembrane segment spans residues 45 to 67 (YILLNLAVANLFMVLGGFTTTMY). Over 68–81 (TSMHGYFVLGRLGC) the chain is Extracellular. A disulfide bridge links Cys81 with Cys158. A helical membrane pass occupies residues 82 to 104 (NLEGFFATMGGEIALWSLVVLAI). Positions 105 to 107 (ERW) match the 'Ionic lock' involved in activated form stabilization motif. Over 105-123 (ERWIVVCKPISNFRFTEDH) the chain is Cytoplasmic. Residues 124–144 (AIMGLAFTWVMALSCAVPPLV) traverse the membrane as a helical segment. The Extracellular portion of the chain corresponds to 145–173 (GWSRYIPEGMQCSCGVDYYTRAEGFNNES). Asn171 is a glycosylation site (N-linked (GlcNAc...) asparagine). The helical transmembrane segment at 174–195 (FVIYMFIVHFLTPLIIISFCYG) threads the bilayer. The Cytoplasmic segment spans residues 196–223 (RLLCAVKEAAAAQQESETTQRAEREVSR). A helical membrane pass occupies residues 224-245 (MVVMMVISFLMCWLPYASVAWY). The Extracellular portion of the chain corresponds to 246 to 257 (IFCNQGSEFGPI). A helical membrane pass occupies residues 258-279 (FMTLPAFFAKSSAIYNPLIYIC). Lys267 bears the N6-(retinylidene)lysine mark. Residues 280–289 (MNKQFRHCMI) are Cytoplasmic-facing.

This sequence belongs to the G-protein coupled receptor 1 family. Opsin subfamily. Phosphorylated on some or all of the serine and threonine residues present in the C-terminal region. Post-translationally, contains one covalently linked retinal chromophore.

Its subcellular location is the membrane. The protein localises to the cell projection. It localises to the cilium. The protein resides in the photoreceptor outer segment. In terms of biological role, photoreceptor required for image-forming vision at low light intensity. While most salt water fish species use retinal as chromophore, most freshwater fish use 3-dehydroretinal, or a mixture of retinal and 3-dehydroretinal. Light-induced isomerization of 11-cis to all-trans retinal triggers a conformational change that activates signaling via G-proteins. Subsequent receptor phosphorylation mediates displacement of the bound G-protein alpha subunit by arrestin and terminates signaling. In Cottocomephorus inermis (Longfin Baikal sculpin), this protein is Rhodopsin (rho).